Consider the following 177-residue polypeptide: Large ribosomal subunit protein uL5 (177 aa).

The protein belongs to the universal ribosomal protein uL5 family. In terms of assembly, part of the 50S ribosomal subunit; part of the 5S rRNA/L5/L18/L25 subcomplex. Contacts the 5S rRNA and the P site tRNA. Forms a bridge to the 30S subunit in the 70S ribosome.

Its function is as follows. This is one of the proteins that bind and probably mediate the attachment of the 5S RNA into the large ribosomal subunit, where it forms part of the central protuberance. In the 70S ribosome it contacts protein S13 of the 30S subunit (bridge B1b), connecting the 2 subunits; this bridge is implicated in subunit movement. Contacts the P site tRNA; the 5S rRNA and some of its associated proteins might help stabilize positioning of ribosome-bound tRNAs. In Neorickettsia sennetsu (strain ATCC VR-367 / Miyayama) (Ehrlichia sennetsu), this protein is Large ribosomal subunit protein uL5.